Consider the following 172-residue polypeptide: Large ribosomal subunit protein uL10 (172 aa).

This sequence belongs to the universal ribosomal protein uL10 family. Part of the ribosomal stalk of the 50S ribosomal subunit. The N-terminus interacts with L11 and the large rRNA to form the base of the stalk. The C-terminus forms an elongated spine to which L12 dimers bind in a sequential fashion forming a multimeric L10(L12)X complex.

Forms part of the ribosomal stalk, playing a central role in the interaction of the ribosome with GTP-bound translation factors. In Afipia carboxidovorans (strain ATCC 49405 / DSM 1227 / KCTC 32145 / OM5) (Oligotropha carboxidovorans), this protein is Large ribosomal subunit protein uL10.